The chain runs to 369 residues: MILKRISILNYKNLEQVEIGFSAKLNCFFGQNGMGKTNLLDAVYFLSFCKSSGNPIDSQNIRHEQDFFVIQGFYEAEDGTPEEIYCGMKRRSKKQFKRNKKEYSRFSDHIGFLPLVMVSPADSELIAGGSDERRRFMDVVISQYDKEYLEALIRYNKALAQRNTLLKSEFPVEEELFLVWEEMMAQAGEIVFRKREAFIEEFIPIFQSFYSFISQDKEQVGLSYDSHARDASLLEVLKQSRERDKIMGFSLRGIHKDELNMLLGDFPIKKEGSQGQNKTYLVALKLAQFDFLKRTGQTVPLLLLDDIFDKLDASRVEQIVKLVAGDNFGQIFITDTNREHLDRILQKVGSDYKVFRVDQGVINEMGAEQ.

Gly-30 to Thr-37 is an ATP binding site.

It belongs to the RecF family.

It is found in the cytoplasm. Functionally, the RecF protein is involved in DNA metabolism; it is required for DNA replication and normal SOS inducibility. RecF binds preferentially to single-stranded, linear DNA. It also seems to bind ATP. This is DNA replication and repair protein RecF from Bacteroides thetaiotaomicron (strain ATCC 29148 / DSM 2079 / JCM 5827 / CCUG 10774 / NCTC 10582 / VPI-5482 / E50).